We begin with the raw amino-acid sequence, 469 residues long: MEQLSILDPNKFKHVHFIGIGGISMSGLAEILLNLGFTVSGSDIRSSNITSKLEKKGIKIYTGHSEENIKDADLVVYTAAVKSDNPELAKAKSLGIPTLDRATLLGEIMKKYPFSVAVSGTHGKTTTTSMISLIMLKSALDPTIHIGGELDAIGGNTRIGSNKYFVAEACEYVESFLKFHPYLAVVLNIEADHLDYFKDIEHIKNAFLKFIRLVPENGYVVACADDQNVLSILKDVHCNIITFGLNSKNAMWTAEDISFNENGFAAFTVLKDNERITNIQLKVPGIHNISNALASIAACYALGCSIENIKKGLESYTGIHRRFELKGIENNIKVVDDYAHHPSEIKATLKAARSGNYPRIWTVFQPHTYTRTKFLLDEFSKAFKDTDKVIITDIYSAREKDTGEIHSRILAEKIRENGQDAIYLPDFEGIVEYLKKNASPGDLIITMGAGDVYKVGEMFLKDKQMVAVS.

120 to 126 (GTHGKTT) contributes to the ATP binding site.

Belongs to the MurCDEF family.

The protein localises to the cytoplasm. It carries out the reaction UDP-N-acetyl-alpha-D-muramate + L-alanine + ATP = UDP-N-acetyl-alpha-D-muramoyl-L-alanine + ADP + phosphate + H(+). The protein operates within cell wall biogenesis; peptidoglycan biosynthesis. Cell wall formation. This is UDP-N-acetylmuramate--L-alanine ligase from Acetivibrio thermocellus (strain ATCC 27405 / DSM 1237 / JCM 9322 / NBRC 103400 / NCIMB 10682 / NRRL B-4536 / VPI 7372) (Clostridium thermocellum).